The following is a 125-amino-acid chain: MQGNLPPEAQEKLEQLQDLQEKAQNVATQKQQAEQQLSEAETALDALGDIEESTTMYREVGELLVETEYDNAHDDLDEKVSDLEVRVETLQKQEDRVQEQFESLQEELQDMLGGAGGAMGGGPGA.

The protein belongs to the prefoldin subunit beta family. As to quaternary structure, heterohexamer of two alpha and four beta subunits.

Its subcellular location is the cytoplasm. Molecular chaperone capable of stabilizing a range of proteins. Seems to fulfill an ATP-independent, HSP70-like function in archaeal de novo protein folding. The polypeptide is Prefoldin subunit beta (Halobacterium salinarum (strain ATCC 29341 / DSM 671 / R1)).